The primary structure comprises 469 residues: 3-isopropylmalate dehydratase large subunit (469 aa).

3 residues coordinate [4Fe-4S] cluster: cysteine 347, cysteine 408, and cysteine 411.

Belongs to the aconitase/IPM isomerase family. LeuC type 1 subfamily. In terms of assembly, heterodimer of LeuC and LeuD. [4Fe-4S] cluster serves as cofactor.

The catalysed reaction is (2R,3S)-3-isopropylmalate = (2S)-2-isopropylmalate. The protein operates within amino-acid biosynthesis; L-leucine biosynthesis; L-leucine from 3-methyl-2-oxobutanoate: step 2/4. Its function is as follows. Catalyzes the isomerization between 2-isopropylmalate and 3-isopropylmalate, via the formation of 2-isopropylmaleate. The protein is 3-isopropylmalate dehydratase large subunit of Actinobacillus pleuropneumoniae serotype 7 (strain AP76).